Reading from the N-terminus, the 384-residue chain is MAKHLFTSESVSEGHPDKIADQISDAVLDAILEQDPKARVACETYVKTGMVLVGGEITTSAWVDIEEITRNTVREIGYVHSDMGFDANSCAVLSAIGKQSPDINQGVDRADPLEQGAGDQGLMFGYATNETDVLMPAPITYAHRLVQRQAEVRKNGTLPWLRPDAKSQVTFQYDDGKIVGIDAVVLSTQHAEEIDQKSLQEAVMEEIIKPILPSEWLNASTKFFINPTGRFVIGGPMGDCGLTGRKIIVDTYGGMARHGGGAFSGKDPSKVDRSAAYAARYVAKNIVAAGLADRCEIQVSYAIGVAEPTSIMVETFGTEKVPSEQLTLLVREFFDLRPYGLIQMLDLLHPIYKETAAYGHFGREHFPWEKTDKAQLLRDAAGLK.

His-15 serves as a coordination point for ATP. Asp-17 contributes to the Mg(2+) binding site. Glu-43 lines the K(+) pocket. L-methionine is bound by residues Glu-56 and Gln-99. The segment at 99 to 109 (QSPDINQGVDR) is flexible loop. Residues 164-166 (DAK), 230-231 (RF), Asp-239, 245-246 (RK), Ala-262, and Lys-266 contribute to the ATP site. Asp-239 contributes to the L-methionine binding site. Lys-270 provides a ligand contact to L-methionine.

It belongs to the AdoMet synthase family. In terms of assembly, homotetramer; dimer of dimers. The cofactor is Mg(2+). K(+) is required as a cofactor.

Its subcellular location is the cytoplasm. It catalyses the reaction L-methionine + ATP + H2O = S-adenosyl-L-methionine + phosphate + diphosphate. Its pathway is amino-acid biosynthesis; S-adenosyl-L-methionine biosynthesis; S-adenosyl-L-methionine from L-methionine: step 1/1. Catalyzes the formation of S-adenosylmethionine (AdoMet) from methionine and ATP. The overall synthetic reaction is composed of two sequential steps, AdoMet formation and the subsequent tripolyphosphate hydrolysis which occurs prior to release of AdoMet from the enzyme. The sequence is that of S-adenosylmethionine synthase from Citrobacter koseri (strain ATCC BAA-895 / CDC 4225-83 / SGSC4696).